A 906-amino-acid polypeptide reads, in one-letter code: Translation initiation factor IF-2 (906 aa).

2 disordered regions span residues 134 to 250 and 269 to 317; these read RQRN…GSHV and HLSA…FERP. Positions 136-177 are enriched in basic and acidic residues; it reads RNLDEQQRLAESDRVRDEEIQRKRDEEQAAKDRAEAERKAAE. 2 stretches are compositionally biased toward low complexity: residues 178–232 and 287–305; these read EAAA…STPA and GRPGSSSSRRGNDNGRGSN. The tr-type G domain occupies 405 to 574; it reads TRPPVVTIMG…SLQAEVLELK (170 aa). The interval 414-421 is G1; it reads GHVDHGKT. 414–421 serves as a coordination point for GTP; that stretch reads GHVDHGKT. The G2 stretch occupies residues 439 to 443; the sequence is GITQH. The G3 stretch occupies residues 460–463; the sequence is DTPG. GTP contacts are provided by residues 460 to 464 and 514 to 517; these read DTPGH and NKID. The interval 514–517 is G4; it reads NKID. The tract at residues 550–552 is G5; the sequence is SAK.

This sequence belongs to the TRAFAC class translation factor GTPase superfamily. Classic translation factor GTPase family. IF-2 subfamily.

The protein localises to the cytoplasm. Functionally, one of the essential components for the initiation of protein synthesis. Protects formylmethionyl-tRNA from spontaneous hydrolysis and promotes its binding to the 30S ribosomal subunits. Also involved in the hydrolysis of GTP during the formation of the 70S ribosomal complex. The polypeptide is Translation initiation factor IF-2 (Xanthomonas oryzae pv. oryzae (strain MAFF 311018)).